The primary structure comprises 807 residues: Shutoff protein (807 aa).

Residues methionine 1–glycine 88 are disordered. The segment covering phenylalanine 16–threonine 29 has biased composition (polar residues). Composition is skewed to basic and acidic residues over residues arginine 59–glutamine 70 and glutamine 79–glycine 88. Positions valine 280–cysteine 345 are binding to host EIF4G. An RRM domain is found at arginine 348–serine 466. Phosphotyrosine; by host occurs at positions 365 and 682. Positions aspartate 684 to proline 807 are disordered. Residues glycine 726–glycine 743 are compositionally biased toward gly residues. Residues glycine 744–arginine 755 show a composition bias toward basic and acidic residues. Residues glycine 756–arginine 765 are compositionally biased toward basic residues.

It belongs to the adenoviridae shutoff protein family. In terms of assembly, monomer. Interacts with hexon protein; this interaction allows chaperoning and trimerization of hexon proteins. Interacts (via N-terminus) with host initiation factor EIF4G (via C-terminus). Interacts (via RRM domain) with viral mRNAs that contain the tripartite leader; this interaction allows ribosome shunting and expression of viral late mRNAs. In terms of processing, might be cleaved by the viral protease. Phosphorylated. Tyrosine phosphorylation enhances preferential binding to tripartite leader mRNAs and allows ribosome shunting. Post-translationally, methylated. Asymmetric dimethylation by host PRMT1 of the Arg/Gly-rich region may regulate shutoff protein binding to hexon and promote the capsid assembly in the nucleus.

The protein localises to the host cytoplasm. Functionally, protein that inhibits host translation while promoting late viral translation by ribosome shunting. Blocks host cap-dependent translation by binding to eIF4G, displacing MKNK1 from cap initiation complexes and preventing EIF4E phosphorylation. Binds to the tripartite leader sequence of viral late mRNAs and recruits host eIF4G, PABPC1/poly-A binding protein and 40S ribosomes subunits on viral mRNAs, allowing ribosome shunting and efficient translation of late viral mRNAs even though conventional translation via ribosome scanning from the cap has been shut off in the host cell. During assembly, acts as a chaperone protein that helps hexon proteins assembly into trimers. This is Shutoff protein from Homo sapiens (Human).